The chain runs to 253 residues: Serine/threonine-protein phosphatase 3 (253 aa).

Mn(2+) is required as a cofactor. Post-translationally, phosphorylated by YegI.

The catalysed reaction is O-phospho-L-seryl-[protein] + H2O = L-seryl-[protein] + phosphate. It catalyses the reaction O-phospho-L-threonyl-[protein] + H2O = L-threonyl-[protein] + phosphate. With respect to regulation, activity dramatically decreases in the presence of the general protein phosphatase inhibitor sodium phosphate. Slightly inhibited by sodium fluoride. Activity decreases in the presence of the metal chelator EDTA. Its function is as follows. PP2C-like phosphatase that can dephosphorylate YegI. In vitro, can hydrolyze p-nitrophenyl phosphate (pNPP) to p-nitrophenol. The sequence is that of Serine/threonine-protein phosphatase 3 from Escherichia coli (strain K12).